The primary structure comprises 262 residues: Ribosomal RNA small subunit methyltransferase A (262 aa).

Positions 11, 13, 38, 60, 85, and 105 each coordinate S-adenosyl-L-methionine.

Belongs to the class I-like SAM-binding methyltransferase superfamily. rRNA adenine N(6)-methyltransferase family. RsmA subfamily.

The protein resides in the cytoplasm. The enzyme catalyses adenosine(1518)/adenosine(1519) in 16S rRNA + 4 S-adenosyl-L-methionine = N(6)-dimethyladenosine(1518)/N(6)-dimethyladenosine(1519) in 16S rRNA + 4 S-adenosyl-L-homocysteine + 4 H(+). Specifically dimethylates two adjacent adenosines (A1518 and A1519) in the loop of a conserved hairpin near the 3'-end of 16S rRNA in the 30S particle. May play a critical role in biogenesis of 30S subunits. The polypeptide is Ribosomal RNA small subunit methyltransferase A (Neorickettsia sennetsu (strain ATCC VR-367 / Miyayama) (Ehrlichia sennetsu)).